Reading from the N-terminus, the 248-residue chain is 7-cyano-7-deazaguanine synthase (248 aa).

An ATP-binding site is contributed by 22–32 (LSGGLDSTTCL). Zn(2+)-binding residues include cysteine 216, cysteine 225, cysteine 228, and cysteine 231.

It belongs to the QueC family. Zn(2+) is required as a cofactor.

The enzyme catalyses 7-carboxy-7-deazaguanine + NH4(+) + ATP = 7-cyano-7-deazaguanine + ADP + phosphate + H2O + H(+). It participates in purine metabolism; 7-cyano-7-deazaguanine biosynthesis. Its function is as follows. Catalyzes the ATP-dependent conversion of 7-carboxy-7-deazaguanine (CDG) to 7-cyano-7-deazaguanine (preQ(0)). In Leptospira biflexa serovar Patoc (strain Patoc 1 / Ames), this protein is 7-cyano-7-deazaguanine synthase.